We begin with the raw amino-acid sequence, 396 residues long: Pectinesterase (396 aa).

The signal sequence occupies residues 1–26 (MQSTTLYLKTAAFLGGCSLFAATALA). Substrate is bound at residue Thr-174. Asp-232 functions as the Proton donor in the catalytic mechanism. Asp-259 acts as the Nucleophile in catalysis. 2 residues coordinate substrate: Arg-324 and Trp-326.

This sequence belongs to the pectinesterase family.

It localises to the secreted. It catalyses the reaction [(1-&gt;4)-alpha-D-galacturonosyl methyl ester](n) + n H2O = [(1-&gt;4)-alpha-D-galacturonosyl](n) + n methanol + n H(+). The protein operates within glycan metabolism; pectin degradation; 2-dehydro-3-deoxy-D-gluconate from pectin: step 1/5. Involved in maceration and soft-rotting of plant tissue. This is Pectinesterase (pme) from Ralstonia solanacearum (Pseudomonas solanacearum).